We begin with the raw amino-acid sequence, 162 residues long: Endoribonuclease YbeY (162 aa).

3 residues coordinate Zn(2+): H127, H131, and H137.

Belongs to the endoribonuclease YbeY family. Zn(2+) serves as cofactor.

It localises to the cytoplasm. Functionally, single strand-specific metallo-endoribonuclease involved in late-stage 70S ribosome quality control and in maturation of the 3' terminus of the 16S rRNA. The polypeptide is Endoribonuclease YbeY (Acetivibrio thermocellus (strain ATCC 27405 / DSM 1237 / JCM 9322 / NBRC 103400 / NCIMB 10682 / NRRL B-4536 / VPI 7372) (Clostridium thermocellum)).